Here is a 418-residue protein sequence, read N- to C-terminus: S-adenosylmethionine synthase (418 aa).

H16 is a binding site for ATP. D18 contributes to the Mg(2+) binding site. E44 is a binding site for K(+). Residues E57 and Q100 each contribute to the L-methionine site. The interval 100 to 110 (QSPDISQGVTK) is flexible loop. ATP-binding positions include 175 to 177 (DGK), 251 to 252 (KF), D260, 266 to 267 (RK), A283, and K287. Position 260 (D260) interacts with L-methionine. An L-methionine-binding site is contributed by K291.

It belongs to the AdoMet synthase family. In terms of assembly, homotetramer; dimer of dimers. Mg(2+) serves as cofactor. It depends on K(+) as a cofactor.

Its subcellular location is the cytoplasm. The catalysed reaction is L-methionine + ATP + H2O = S-adenosyl-L-methionine + phosphate + diphosphate. The protein operates within amino-acid biosynthesis; S-adenosyl-L-methionine biosynthesis; S-adenosyl-L-methionine from L-methionine: step 1/1. Catalyzes the formation of S-adenosylmethionine (AdoMet) from methionine and ATP. The overall synthetic reaction is composed of two sequential steps, AdoMet formation and the subsequent tripolyphosphate hydrolysis which occurs prior to release of AdoMet from the enzyme. The protein is S-adenosylmethionine synthase of Gloeothece citriformis (strain PCC 7424) (Cyanothece sp. (strain PCC 7424)).